A 194-amino-acid chain; its full sequence is ATP-dependent Clp protease proteolytic subunit (194 aa).

The active-site Nucleophile is the serine 98. Residue histidine 123 is part of the active site.

It belongs to the peptidase S14 family. In terms of assembly, fourteen ClpP subunits assemble into 2 heptameric rings which stack back to back to give a disk-like structure with a central cavity, resembling the structure of eukaryotic proteasomes.

The protein localises to the cytoplasm. The enzyme catalyses Hydrolysis of proteins to small peptides in the presence of ATP and magnesium. alpha-casein is the usual test substrate. In the absence of ATP, only oligopeptides shorter than five residues are hydrolyzed (such as succinyl-Leu-Tyr-|-NHMec, and Leu-Tyr-Leu-|-Tyr-Trp, in which cleavage of the -Tyr-|-Leu- and -Tyr-|-Trp bonds also occurs).. Cleaves peptides in various proteins in a process that requires ATP hydrolysis. Has a chymotrypsin-like activity. Plays a major role in the degradation of misfolded proteins. The polypeptide is ATP-dependent Clp protease proteolytic subunit (Clostridium kluyveri (strain NBRC 12016)).